The primary structure comprises 251 residues: Putative glutamine amidotransferase YLR126C (251 aa).

The Glutamine amidotransferase type-1 domain maps to glutamate 48–leucine 232. Active-site for GATase activity residues include cysteine 112, histidine 198, and glutamate 200.

The protein resides in the cytoplasm. Functionally, may have a role in copper and iron homeostasis. The chain is Putative glutamine amidotransferase YLR126C from Saccharomyces cerevisiae (strain ATCC 204508 / S288c) (Baker's yeast).